The sequence spans 303 residues: Recombination-associated protein RdgC (303 aa).

The protein belongs to the RdgC family.

The protein resides in the cytoplasm. It is found in the nucleoid. In terms of biological role, may be involved in recombination. The polypeptide is Recombination-associated protein RdgC (Salmonella newport (strain SL254)).